The chain runs to 218 residues: Small ribosomal subunit protein uS3c (218 aa).

Residues 47-118 (VQKHMRVSSG…RLNIAITRVA (72 aa)) enclose the KH type-2 domain.

Belongs to the universal ribosomal protein uS3 family. Part of the 30S ribosomal subunit.

Its subcellular location is the plastid. The protein resides in the chloroplast. The chain is Small ribosomal subunit protein uS3c (rps3) from Illicium oligandrum (Star anise).